We begin with the raw amino-acid sequence, 246 residues long: 3'(2'),5'-bisphosphate nucleotidase CysQ (246 aa).

Residues glutamate 64, aspartate 83, leucine 85, aspartate 86, and aspartate 205 each coordinate Mg(2+). Glutamate 64 contacts substrate. Substrate is bound by residues 85–88 (LDGT) and aspartate 205.

The protein belongs to the inositol monophosphatase superfamily. CysQ family. Requires Mg(2+) as cofactor.

It localises to the cell inner membrane. It catalyses the reaction adenosine 3',5'-bisphosphate + H2O = AMP + phosphate. Converts adenosine-3',5'-bisphosphate (PAP) to AMP. In Escherichia coli O6:H1 (strain CFT073 / ATCC 700928 / UPEC), this protein is 3'(2'),5'-bisphosphate nucleotidase CysQ.